Reading from the N-terminus, the 143-residue chain is Ribosome maturation factor RimP (143 aa).

Belongs to the RimP family.

The protein localises to the cytoplasm. Its function is as follows. Required for maturation of 30S ribosomal subunits. The chain is Ribosome maturation factor RimP from Nitrosomonas eutropha (strain DSM 101675 / C91 / Nm57).